The primary structure comprises 161 residues: Regulatory protein RecX (161 aa).

The protein belongs to the RecX family.

It localises to the cytoplasm. Its function is as follows. Modulates RecA activity. In Halorhodospira halophila (strain DSM 244 / SL1) (Ectothiorhodospira halophila (strain DSM 244 / SL1)), this protein is Regulatory protein RecX.